The sequence spans 1663 residues: Cortactin-binding protein 2 (1663 aa).

4 disordered regions span residues 1 to 23 (MATDGASCEPDLSRAPEDAAGAA), 203 to 222 (KKKTNELEEELSAEKRRSTE), 358 to 440 (RQAS…LHPG), and 454 to 479 (GNANDPDQNGNTTQSPPSRDMSPTSR). The stretch at 119-276 (KKMQERMSAQ…EQLKRGSDSK (158 aa)) forms a coiled coil. Positions 386 to 396 (PSTDSTPDPTS) are enriched in low complexity. Polar residues predominate over residues 411 to 422 (QTPGIAPQNSQA). Arg498 carries the asymmetric dimethylarginine modification. Positions 499 to 616 (FTSPQAGAPS…SSPQLPPKPS (118 aa)) are disordered. Over residues 583 to 593 (TVASPPSSLPQ) the composition is skewed to polar residues. ANK repeat units follow at residues 709–739 (GRPTLLQQAAAQGNVTLLSMLLNEEGLDINY), 743–772 (DGHSALYSAAKNGHTDCVRLLLSAEAQINA), 776–805 (NGFTPLCAAAAQGHFECVELLIAYDANINH), 809–838 (GGQTPLYLACKNENKECIKLLLEAGTNRSV), 842–871 (DGWTPVHAAVDTGNVDSLKLLMYHRIPACG), and 912–942 (EGWTAAHIAASKGFKNCLEILCRHGGLEPER). Positions 1446–1477 (NKKKGESGAWRKVNTSPRRKSGRFSLPTWNKP) are disordered. Residue Ser1524 is modified to Phosphoserine. 2 disordered regions span residues 1580–1602 (SQKEVSPLSSHQTTECSNSKSKT) and 1618–1663 (SKVT…KPNK). Residues 1582–1599 (KEVSPLSSHQTTECSNSK) show a composition bias toward polar residues. A compositionally biased stretch (low complexity) spans 1624 to 1638 (SQNTKRSSSSSNTRQ). Positions 1645-1663 (SKKENWNLHKNEHLDKPNK) are enriched in basic and acidic residues.

As to quaternary structure, interacts with CTTN/cortactin SH3 domain. Interacts with STRN, STRN4/zinedin and MOB4/phocein; this interactions mediate the association with the STRIPAK core complex and may regulate dendritic spine distribution of the STRIPAK complex in hippocampal neurons. Activation of glutamate receptors weakens the interaction with STRN and STRN4.

The protein resides in the cytoplasm. The protein localises to the cell cortex. It is found in the cell projection. It localises to the dendritic spine. Regulates the dendritic spine distribution of CTTN/cortactin in hippocampal neurons, and thus controls dendritic spinogenesis and dendritic spine maintenance. Associates with the striatin-interacting phosphatase and kinase (STRIPAK) core complex to regulate dendritic spine distribution of the STRIPAK complex in hippocampal neurons. This chain is Cortactin-binding protein 2 (CTTNBP2), found in Colobus guereza (Mantled guereza).